A 232-amino-acid chain; its full sequence is Phosphatidylserine decarboxylase proenzyme (232 aa).

Serine 190 (schiff-base intermediate with substrate; via pyruvic acid) is an active-site residue. Serine 190 is modified (pyruvic acid (Ser); by autocatalysis).

This sequence belongs to the phosphatidylserine decarboxylase family. PSD-A subfamily. As to quaternary structure, heterodimer of a large membrane-associated beta subunit and a small pyruvoyl-containing alpha subunit. The cofactor is pyruvate. In terms of processing, is synthesized initially as an inactive proenzyme. Formation of the active enzyme involves a self-maturation process in which the active site pyruvoyl group is generated from an internal serine residue via an autocatalytic post-translational modification. Two non-identical subunits are generated from the proenzyme in this reaction, and the pyruvate is formed at the N-terminus of the alpha chain, which is derived from the carboxyl end of the proenzyme. The post-translation cleavage follows an unusual pathway, termed non-hydrolytic serinolysis, in which the side chain hydroxyl group of the serine supplies its oxygen atom to form the C-terminus of the beta chain, while the remainder of the serine residue undergoes an oxidative deamination to produce ammonia and the pyruvoyl prosthetic group on the alpha chain.

It localises to the cell membrane. The enzyme catalyses a 1,2-diacyl-sn-glycero-3-phospho-L-serine + H(+) = a 1,2-diacyl-sn-glycero-3-phosphoethanolamine + CO2. The protein operates within phospholipid metabolism; phosphatidylethanolamine biosynthesis; phosphatidylethanolamine from CDP-diacylglycerol: step 2/2. Functionally, catalyzes the formation of phosphatidylethanolamine (PtdEtn) from phosphatidylserine (PtdSer). This is Phosphatidylserine decarboxylase proenzyme from Rhodopseudomonas palustris (strain BisB18).